Consider the following 270-residue polypeptide: tRNA pseudouridine synthase A (270 aa).

Asp-52 (nucleophile) is an active-site residue. Position 110 (Tyr-110) interacts with substrate.

The protein belongs to the tRNA pseudouridine synthase TruA family. Homodimer.

It catalyses the reaction uridine(38/39/40) in tRNA = pseudouridine(38/39/40) in tRNA. Functionally, formation of pseudouridine at positions 38, 39 and 40 in the anticodon stem and loop of transfer RNAs. The chain is tRNA pseudouridine synthase A from Paraburkholderia xenovorans (strain LB400).